A 256-amino-acid polypeptide reads, in one-letter code: Triosephosphate isomerase (256 aa).

Residue 9–11 (NWK) coordinates substrate. The Electrophile role is filled by H97. E169 (proton acceptor) is an active-site residue. Residues G175, S214, and 235-236 (GG) contribute to the substrate site.

It belongs to the triosephosphate isomerase family. Homodimer.

The protein resides in the cytoplasm. The catalysed reaction is D-glyceraldehyde 3-phosphate = dihydroxyacetone phosphate. The protein operates within carbohydrate biosynthesis; gluconeogenesis. Its pathway is carbohydrate degradation; glycolysis; D-glyceraldehyde 3-phosphate from glycerone phosphate: step 1/1. In terms of biological role, involved in the gluconeogenesis. Catalyzes stereospecifically the conversion of dihydroxyacetone phosphate (DHAP) to D-glyceraldehyde-3-phosphate (G3P). The protein is Triosephosphate isomerase of Aliivibrio fischeri (strain ATCC 700601 / ES114) (Vibrio fischeri).